The chain runs to 497 residues: Putative endothelial lipase (497 aa).

An N-terminal signal peptide occupies residues Met-1 to Ala-23. A disulfide bridge connects residues Cys-73 and Cys-86. Asn-89 and Asn-145 each carry an N-linked (GlcNAc...) asparagine glycan. Ser-178 acts as the Nucleophile in catalysis. The active-site Charge relay system is the Asp-202. The cysteines at positions 262 and 282 are disulfide-linked. The active-site Charge relay system is His-284. 2 disulfides stabilise this stretch: Cys-307-Cys-326 and Cys-318-Cys-321. Lys-335–Lys-347 provides a ligand contact to heparin. The 136-residue stretch at Phe-357–His-492 folds into the PLAT domain. Asn-403 carries an N-linked (GlcNAc...) asparagine glycan.

It belongs to the AB hydrolase superfamily. Lipase family. Head to tail homodimer. In terms of tissue distribution, expressed by the venom gland.

It localises to the secreted. The catalysed reaction is a triacylglycerol + H2O = a diacylglycerol + a fatty acid + H(+). Inhibited by serum. Its function is as follows. Has phospholipase and triglyceride lipase activities. This is Putative endothelial lipase from Crotalus adamanteus (Eastern diamondback rattlesnake).